Reading from the N-terminus, the 143-residue chain is Larval cuticle protein LCP-17 (143 aa).

An N-terminal signal peptide occupies residues 1-16 (MKFLIVLAVAVACASA). Residues 41-110 (EGHFQFNYET…PQGSHLPTPH (70 aa)) form the Chitin-binding type R&amp;R domain.

Its function is as follows. Component of the cuticle of the larva of Bombyx mori. The chain is Larval cuticle protein LCP-17 (LCP17) from Bombyx mori (Silk moth).